The following is a 171-amino-acid chain: Iron-sulfur cluster assembly protein 3 (171 aa).

Residues 1–49 (MLRQTTKRAFLGLASQNPTPFPVVSRLYHPNVIDHYDNPRNVGSFDKND) constitute a mitochondrion transit peptide.

The protein belongs to the NifU family. In terms of assembly, component of the core Fe-S cluster (ISC) assembly machinery. It depends on [2Fe-2S] cluster as a cofactor. As to expression, mostly expressed in flowers and pollen, and, to a lower extent, in leaves and roots.

The protein resides in the mitochondrion matrix. It participates in cofactor biosynthesis; iron-sulfur cluster biosynthesis. Its function is as follows. Scaffold protein for the de novo synthesis of iron-sulfur (Fe-S) clusters within mitochondria, which is required for maturation of both mitochondrial and cytoplasmic [2Fe-2S] and [4Fe-4S] proteins. First, a [2Fe-2S] cluster is transiently assembled on the scaffold protein ISCU (ISU1, ISU2 or ISU3). In a second step, the cluster is released from ISCU, transferred to a glutaredoxin, followed by the formation of mitochondrial [2Fe-2S] proteins, the synthesis of [4Fe-4S] clusters and their target-specific insertion into the recipient apoproteins. Cluster assembly on ISCU depends on the function of the cysteine desulfurase complex NFS1-ISD11, which serves as the sulfur donor for cluster synthesis, the iron-binding protein frataxin as the putative iron donor, and the electron transfer chain comprised of ferredoxin reductase and ferredoxin, which receive their electrons from NADH. The protein is Iron-sulfur cluster assembly protein 3 (ISU3) of Arabidopsis thaliana (Mouse-ear cress).